A 320-amino-acid chain; its full sequence is MIKKIGVLTSGGDAPGMNAAVRGVVRTALSEGLEVYGVYDGYLGLYEGRIEKLDRSSVSDVINKGGTFLGSARFPEFKEVEVREQAIENLKKHGIDALVVIGGDGSYMGAKKLTEMGYPCIGLPGTIDNDIAGTDYTIGYLTALNTVIDAIDRLRDTSSSHQRISIVEIMGRHCGDLTLMSAIAGGCEYIITPETGLDKDKLIKNIQDGIAKGKKHAIIALTELMMDANELAREIEAATGRETRATVLGHIQRGGRPAAFDRVLASRMGNYAVHLLMEGHGGRCVGIVKEQLVHHDIIDAIENMKRPVRSDLYQVAEELF.

An ATP-binding site is contributed by Gly12. ADP is bound at residue 22–26 (RGVVR). ATP is bound by residues 73 to 74 (RF) and 103 to 106 (GDGS). A Mg(2+)-binding site is contributed by Asp104. 126–128 (TID) is a substrate binding site. The active-site Proton acceptor is the Asp128. Arg155 is an ADP binding site. Substrate-binding positions include Arg163 and 170 to 172 (MGR). Residues 186–188 (GCE), Lys212, and 214–216 (KKH) contribute to the ADP site. Residues Glu223, Arg244, and 250 to 253 (HIQR) contribute to the substrate site.

It belongs to the phosphofructokinase type A (PFKA) family. ATP-dependent PFK group I subfamily. Prokaryotic clade 'B1' sub-subfamily. In terms of assembly, homotetramer. It depends on Mg(2+) as a cofactor.

It is found in the cytoplasm. The enzyme catalyses beta-D-fructose 6-phosphate + ATP = beta-D-fructose 1,6-bisphosphate + ADP + H(+). It functions in the pathway carbohydrate degradation; glycolysis; D-glyceraldehyde 3-phosphate and glycerone phosphate from D-glucose: step 3/4. With respect to regulation, allosterically activated by ADP and other diphosphonucleosides, and allosterically inhibited by phosphoenolpyruvate. Catalyzes the phosphorylation of D-fructose 6-phosphate to fructose 1,6-bisphosphate by ATP, the first committing step of glycolysis. The protein is ATP-dependent 6-phosphofructokinase of Vibrio campbellii (strain ATCC BAA-1116).